Here is a 953-residue protein sequence, read N- to C-terminus: Xylosyltransferase 1 (953 aa).

The Cytoplasmic portion of the chain corresponds to 1 to 17; the sequence is MVAAPCARRLARRSHSA. Residues 18–38 traverse the membrane as a helical; Signal-anchor for type II membrane protein segment; the sequence is LLAALMVLLLHTLVVWNFSSL. The Lumenal portion of the chain corresponds to 39-953; the sequence is DSGAGEQRRA…GAVKPDGRLR (915 aa). Over residues 48–62 the composition is skewed to low complexity; it reads AGAAAGAAEQQQPAA. 2 disordered regions span residues 48-67 and 74-251; these read AGAA…RRER and LPAA…APKC. The span at 79-97 shows a compositional bias: gly residues; the sequence is GGPGGRAGGGGARGGGPGG. The span at 138-154 shows a compositional bias: basic and acidic residues; sequence KVRTDSNNENSVPKDFE. Over residues 156–165 the composition is skewed to polar residues; sequence VDNSNFAPRT. 2 stretches are compositionally biased toward basic and acidic residues: residues 170-197 and 205-216; these read HQPE…DKRQ and GPKEVLPPREKA. N-linked (GlcNAc...) asparagine glycosylation is present at Asn-219. 4 disulfide bridges follow: Cys-251/Cys-279, Cys-295/Cys-536, Cys-555/Cys-568, and Cys-557/Cys-566. Residues Val-327, Asp-355, and 384–386 each bind UDP-alpha-D-xylose; that span reads TIW. N-linked (GlcNAc...) asparagine glycosylation occurs at Asn-415. Residue 488-489 participates in UDP-alpha-D-xylose binding; that stretch reads DW. Residues Ser-569 and 592–593 each bind UDP-alpha-D-xylose; that span reads RK. Disulfide bonds link Cys-669–Cys-921 and Cys-914–Cys-927. Asn-771 is a glycosylation site (N-linked (GlcNAc...) asparagine). The disordered stretch occupies residues 933-953; sequence SSFSPDPKSELGAVKPDGRLR.

Belongs to the glycosyltransferase 14 family. XylT subfamily. In terms of assembly, monomer. The cofactor is a divalent metal cation. In terms of processing, contains 7 disulfide bonds. Post-translationally, N-glycosylated. Detected in brain, spleen, kidney and testis, and at low levels in skeletal muscle.

The protein localises to the golgi apparatus membrane. It carries out the reaction UDP-alpha-D-xylose + L-seryl-[protein] = 3-O-(beta-D-xylosyl)-L-seryl-[protein] + UDP + H(+). It participates in glycan metabolism; chondroitin sulfate biosynthesis. Its pathway is glycan metabolism; heparan sulfate biosynthesis. In terms of biological role, catalyzes the first step in the biosynthesis of chondroitin sulfate and dermatan sulfate proteoglycans, such as DCN. Transfers D-xylose from UDP-D-xylose to specific serine residues of the core protein. Required for normal maturation of chondrocytes during bone development, normal onset of ossification and normal embryonic and postnatal skeleton development, especially of the long bones. In Mus musculus (Mouse), this protein is Xylosyltransferase 1 (Xylt1).